Reading from the N-terminus, the 445-residue chain is Xylose isomerase (445 aa).

Active-site residues include His-99 and Asp-102. The Mg(2+) site is built by Glu-230, Glu-266, His-269, Asp-294, Asp-305, Asp-307, and Asp-337.

It belongs to the xylose isomerase family. As to quaternary structure, homotetramer. Mg(2+) serves as cofactor.

The protein localises to the cytoplasm. It catalyses the reaction alpha-D-xylose = alpha-D-xylulofuranose. The polypeptide is Xylose isomerase (Geobacillus thermodenitrificans (strain NG80-2)).